A 267-amino-acid polypeptide reads, in one-letter code: MQALTNPFPIGSSSLIHCMTNEISCEMLANGILALGCKPVMADDPREVLDFTKQSQALFINLGHLSAEKEKAIRMAASYANQSSLPMVVDAVGVTTSSIRKSLVKDLLDYRPTVLKGNMSEIRSLVGLKHHGVGVDASAKDQETEDLLQVLKDWCQTYPGMSFLVTGPKDLIVSENQVAVLENGCTELDWITGTGDLVGALTAVFLSQGKTGFEASCLAVSYLNIAAEKIVVQGMGLEEFRYQVLNQLSLLRRDENWLDTIKGEVYE.

A substrate-binding site is contributed by Met-41. Positions 116 and 166 each coordinate ATP. Substrate is bound at residue Gly-193.

It belongs to the Thz kinase family. Requires Mg(2+) as cofactor.

The enzyme catalyses 5-(2-hydroxyethyl)-4-methylthiazole + ATP = 4-methyl-5-(2-phosphooxyethyl)-thiazole + ADP + H(+). It participates in cofactor biosynthesis; thiamine diphosphate biosynthesis; 4-methyl-5-(2-phosphoethyl)-thiazole from 5-(2-hydroxyethyl)-4-methylthiazole: step 1/1. Functionally, catalyzes the phosphorylation of the hydroxyl group of 4-methyl-5-beta-hydroxyethylthiazole (THZ). This Streptococcus pneumoniae (strain P1031) protein is Hydroxyethylthiazole kinase 2.